The chain runs to 525 residues: Sterol O-acyltransferase 2 (525 aa).

Disordered stretches follow at residues 1 to 34 and 77 to 97; these read MQPK…THGT and QDRP…ELHP. Residues 1–119 lie on the Cytoplasmic side of the membrane; that stretch reads MQPKVPQLRR…IDELMEVQHF (119 aa). The span at 9–23 shows a compositional bias: basic and acidic residues; it reads RRREGLGEEQEKGAR. His-118 serves as a coordination point for cholesterol. A helical membrane pass occupies residues 120–141; sequence RTIYHMFIAGLCVLIISTLAID. The Lumenal segment spans residues 142–161; sequence FIDEGRLMLEFDLLLFSFGQ. Residues 162-187 traverse the membrane as a helical segment; the sequence is LPLALMTWVPMFLSTLLVPYQTLWLW. Residues 188 to 199 lie on the Cytoplasmic side of the membrane; the sequence is ARPRAGGAWMLG. Residues 200–223 traverse the membrane as a helical segment; it reads ASLGCVLLAAHAVVLCVLPVHVSV. Residues 224–231 are Lumenal-facing; that stretch reads RHELPPAS. Residues 232 to 255 form a helical membrane-spanning segment; it reads RCVLVFEQVRLLMKSYSFLRETVP. Over 256-296 the chain is Cytoplasmic; it reads GIFCVRGGKGISPPSFSSYLYFLFCPTLIYRETYPRTPSIR. The residue at position 280 (Cys-280) is a Cysteine sulfenic acid (-SOH); alternate. Cys-280 participates in a covalent cross-link: Glycyl cysteine thioester (Cys-Gly) (interchain with G-Cter in ubiquitin); alternate. The chain crosses the membrane as a helical span at residues 297–329; that stretch reads WNYVAKNFAQVLGCLLYACFILGRLCVPVFANM. Residues 330–346 are Lumenal-facing; that stretch reads SREPFSTRALLLSILHA. Residues 347-372 traverse the membrane as a helical segment; sequence TGPGIFMLLLIFFAFLHCWLNAFAEM. Residues 373–420 are Cytoplasmic-facing; it reads LRFGDRMFYRDWWNSTSFSNYYRTWNVVVHDWLYSYVYQDGLWLLGRR. The FYXDWWN motif signature appears at 380 to 386; that stretch reads FYRDWWN. Residues Asn-392, Arg-395, Asn-398, His-402, Tyr-410, and Ser-433 each coordinate an acyl-CoA. Residues 421 to 445 traverse the membrane as a helical segment; the sequence is ARGVAMLGVFLVSAVVHEYIFCFVL. Residue His-437 is part of the active site. Residues 446–451 lie on the Lumenal side of the membrane; that stretch reads GFFYPV. Residues 452–467 form a helical membrane-spanning segment; the sequence is MLMLFLVFGGLLNFTM. Topologically, residues 468-473 are cytoplasmic; the sequence is NDRHTG. Residues 474–505 traverse the membrane as a helical segment; the sequence is PAWNILMWTFLFMGQGIQVSLYCQEWYARRHC. The Lumenal segment spans residues 506 to 525; it reads PLPQTTFWGMVTPRSWSCHP.

The protein belongs to the membrane-bound acyltransferase family. Sterol o-acyltransferase subfamily. May form homo- or heterodimers. Interacts with INSIG1; the interaction is direct and promotes association with AMFR/gp78. Post-translationally, polyubiquitinated by AMFR/gp78 at Cys-280, leading to its degradation when the lipid levels are low. Association with AMFR/gp78 is mediated via interaction with INSIG1. High concentration of cholesterol and fatty acid results in Cys-280 oxidation, preventing ubiquitination at the same site, resulting in protein stabilization. In terms of processing, oxidized at Cys-280: high concentration of cholesterol and fatty acid induce reactive oxygen species, which oxidizes Cys-280, preventing ubiquitination at the same site, and resulting in protein stabilization.

It is found in the endoplasmic reticulum membrane. The catalysed reaction is a sterol + a long-chain fatty acyl-CoA = a long-chain 3-hydroxysterol ester + CoA. The enzyme catalyses cholesterol + an acyl-CoA = a cholesterol ester + CoA. It carries out the reaction cholesterol + (9Z)-octadecenoyl-CoA = cholesteryl (9Z-octadecenoate) + CoA. It catalyses the reaction (5Z,8Z,11Z,14Z,17Z)-eicosapentaenoyl-CoA + cholesterol = (5Z,8Z,11Z,14Z,17Z-eicosapentaenoyl)-cholesterol + CoA. The catalysed reaction is (9Z,12Z,15Z)-octadecatrienoyl-CoA + cholesterol = (9Z,12Z,15Z-octadecatrienoyl)-cholesterol + CoA. The enzyme catalyses (5Z,8Z,11Z,14Z)-eicosatetraenoyl-CoA + cholesterol = cholesteryl (5Z,8Z,11Z,14Z)-eicosatetraenoate + CoA. Its function is as follows. Catalyzes the formation of fatty acid-cholesterol esters, which are less soluble in membranes than cholesterol. Plays a role in lipoprotein assembly and dietary cholesterol absorption. Utilizes oleoyl-CoA ((9Z)-octadecenoyl-CoA) and linolenoyl-CoA ((9Z,12Z,15Z)-octadecatrienoyl-CoA) as substrates. May provide cholesteryl esters for lipoprotein secretion from hepatocytes and intestinal mucosa. The chain is Sterol O-acyltransferase 2 from Mus musculus (Mouse).